The sequence spans 310 residues: Probable deoxyhypusine synthase (310 aa).

Lysine 280 (nucleophile) is an active-site residue.

The protein belongs to the deoxyhypusine synthase family. Requires NAD(+) as cofactor.

It carries out the reaction [eIF5A protein]-L-lysine + spermidine = [eIF5A protein]-deoxyhypusine + propane-1,3-diamine. Its pathway is protein modification; eIF5A hypusination. Its function is as follows. Catalyzes the NAD-dependent oxidative cleavage of spermidine and the subsequent transfer of the butylamine moiety of spermidine to the epsilon-amino group of a specific lysine residue of the eIF-5A precursor protein to form the intermediate deoxyhypusine residue. This is Probable deoxyhypusine synthase (dys) from Aeropyrum pernix (strain ATCC 700893 / DSM 11879 / JCM 9820 / NBRC 100138 / K1).